We begin with the raw amino-acid sequence, 559 residues long: MSRPFSSGVYVSRGVALLLAALTAVLLLVLVALASLYGSCAHVQPSEQGNSRVKNTSLWPPGGQEWALPTPAQEPTVGTSQDLGPPSGPWDHLRLPPWLVPLHYDLELWPWLQPDKLSPPNLTFTGRVNITVRCTVASSRLLLHSFLLNYKQVEVWGPLAQDTRNATVGRVQVEKVWFAPDMQFVVLDLGQSLEPGSRYELSFHFSGQVLQVGLEGLFLNLYHDEDELRALVATQMEPTFARHVFPCFDEPALKATFNITVIHHPGYAALSNMPQLGQSERIDVNGSRWTVTTFHTTPRMPTYLVALVVCDLDHISRTERGKEIRVWARKDDIANGYLDFAANITGPIFSFLEDLFNISYRLPKTDIVALPIFASGAMENWGLLIFDESSLLLEPEDELTEKRAMILSIIAHEVGHQWFGNLVTMSWWNNIWLNEGFASYFELELTNYFYPKVPMNMIFFFTVLHGILGEDHALESRAVSTAVENFTETSEINRLFDLYTYKKGACMAWMLASFLSPHLFINALKSYLETFSYSNAEQDDLWRHIQMVIVPFRHFLAEH.

Over 1 to 13 the chain is Cytoplasmic; that stretch reads MSRPFSSGVYVSR. Residues 14–34 traverse the membrane as a helical; Signal-anchor for type II membrane protein segment; the sequence is GVALLLAALTAVLLLVLVALA. Over 35-559 the chain is Lumenal; it reads SLYGSCAHVQ…VPFRHFLAEH (525 aa). 2 N-linked (GlcNAc...) asparagine glycosylation sites follow: N121 and N129. E237 lines the substrate pocket. N-linked (GlcNAc...) asparagine glycosylation is found at N258, N285, and N343. 376 to 380 provides a ligand contact to substrate; the sequence is GAMEN. Zn(2+) is bound at residue H412. Residue E413 is the Proton acceptor of the active site. Residues H416 and E435 each coordinate Zn(2+).

The protein belongs to the peptidase M1 family. In terms of assembly, homodimer. The cofactor is Zn(2+). In terms of processing, N-glycosylated.

Its subcellular location is the membrane. Inhibited by bestatin. In terms of biological role, metalloprotease which may be important for placentation by regulating biological activity of key peptides at the embryo-maternal interface. On synthetic substrates it shows a marked preference for Leu-4-methylcoumaryl-7-amide (Leu-MCA) over Met-MCA, Arg-LCA and Lys-LCA. Cleaves the N-terminal amino acid of several peptides such as angiotensin-3, kisspeptin-10 and endokinin C. This chain is Aminopeptidase Q, found in Mus musculus (Mouse).